Consider the following 396-residue polypeptide: Vacuolar protease A (396 aa).

The first 17 residues, 1–17 (MKGALLTAAMLLGSAQA), serve as a signal peptide directing secretion. The propeptide at 18 to 70 (GVHTMKLKKVPLAEQLESVPIDVQVQHLGQKYTGLRTESHTQAMFKATDAQVS) is activation peptide. The Peptidase A1 domain maps to 85 to 392 (YFSEITIGTP…DLGADTVGIA (308 aa)). Aspartate 103 is an active-site residue. Cysteine 116 and cysteine 121 are oxidised to a cystine. A glycan (N-linked (GlcNAc...) asparagine) is linked at asparagine 138. Aspartate 284 is an active-site residue. A disulfide bridge connects residues cysteine 318 and cysteine 351. An N-linked (GlcNAc...) asparagine glycan is attached at asparagine 335.

It belongs to the peptidase A1 family.

The protein localises to the vacuole. The protein is Vacuolar protease A (pep-4) of Neurospora crassa (strain ATCC 24698 / 74-OR23-1A / CBS 708.71 / DSM 1257 / FGSC 987).